Reading from the N-terminus, the 992-residue chain is ATP-dependent DNA helicase PIF7 (992 aa).

Residues 1 to 21 (MWDGPLRSRQNLRTVAKLRSS) constitute a mitochondrion transit peptide. Disordered regions lie at residues 20–43 (SSGCPLTQSAIHPTTTSPSEGETA), 145–182 (TVNKHSPPASKSAGISQQNDDGGCGASENVDNTTTAAS), and 190–209 (LDSSSSNCTPKQQAQQAVTQ). Polar residues-rich tracts occupy residues 23 to 43 (CPLTQSAIHPTTTSPSEGETA), 173 to 182 (NVDNTTTAAS), and 191 to 208 (DSSSSNCTPKQQAQQAVT). An ATP-binding site is contributed by 237–244 (GGAGTGKS). A DNA-binding region spans residues 651–670 (QAYVALSRCTDVANLVIENF).

The protein belongs to the helicase family. PIF1 subfamily. Monomer. Requires Mg(2+) as cofactor.

Its subcellular location is the mitochondrion matrix. The protein resides in the kinetoplast. The enzyme catalyses Couples ATP hydrolysis with the unwinding of duplex DNA at the replication fork by translocating in the 5'-3' direction. This creates two antiparallel DNA single strands (ssDNA). The leading ssDNA polymer is the template for DNA polymerase III holoenzyme which synthesizes a continuous strand.. It catalyses the reaction ATP + H2O = ADP + phosphate + H(+). DNA-dependent ATPase and 5'-3' DNA helicase required for the maintenance of mitochondrial (kinetoplast) genome stability. This chain is ATP-dependent DNA helicase PIF7, found in Trypanosoma brucei brucei (strain 927/4 GUTat10.1).